The following is a 283-amino-acid chain: RNase adapter protein RapZ (283 aa).

8–15 (GRSGSGKS) is a binding site for ATP. A GTP-binding site is contributed by 56 to 59 (DVRN). Residues 266–283 (RSRGKNVQSRHRTLEKRK) form an RNA-binding region.

It belongs to the RapZ-like family. RapZ subfamily. Homotrimer.

In terms of biological role, modulates the synthesis of GlmS, by affecting the processing and stability of the regulatory small RNA GlmZ. When glucosamine-6-phosphate (GlcN6P) concentrations are high in the cell, RapZ binds GlmZ and targets it to cleavage by RNase E. Consequently, GlmZ is inactivated and unable to activate GlmS synthesis. Under low GlcN6P concentrations, RapZ is sequestered and inactivated by an other regulatory small RNA, GlmY, preventing GlmZ degradation and leading to synthesis of GlmS. The sequence is that of RNase adapter protein RapZ from Photorhabdus laumondii subsp. laumondii (strain DSM 15139 / CIP 105565 / TT01) (Photorhabdus luminescens subsp. laumondii).